A 605-amino-acid polypeptide reads, in one-letter code: FAD-linked oxidoreductase easE (605 aa).

Positions 1–20 (MRHFVTFVVGFLLSWGFLSS) are cleaved as a signal peptide. N-linked (GlcNAc...) asparagine glycosylation is found at Asn-46 and Asn-105. Residues 122 to 307 (CHQGRLPLYS…TQATVRAFPD (186 aa)) enclose the FAD-binding PCMH-type domain. The N-linked (GlcNAc...) asparagine glycan is linked to Asn-370.

This sequence belongs to the oxygen-dependent FAD-linked oxidoreductase family. FAD serves as cofactor.

Its pathway is alkaloid biosynthesis; ergot alkaloid biosynthesis. Its function is as follows. FAD-linked oxidoreductase; part of the gene cluster that mediates the biosynthesis of fungal ergot alkaloid ergovaline, the predominant ergopeptine product in E.festucae var. lolii. DmaW catalyzes the first step of ergot alkaloid biosynthesis by condensing dimethylallyl diphosphate (DMAP) and tryptophan to form 4-dimethylallyl-L-tryptophan. The second step is catalyzed by the methyltransferase easF that methylates 4-dimethylallyl-L-tryptophan in the presence of S-adenosyl-L-methionine, resulting in the formation of 4-dimethylallyl-L-abrine. The catalase easC and the FAD-dependent oxidoreductase easE then transform 4-dimethylallyl-L-abrine to chanoclavine-I which is further oxidized by easD in the presence of NAD(+), resulting in the formation of chanoclavine-I aldehyde. Agroclavine dehydrogenase easG then mediates the conversion of chanoclavine-I aldehyde to agroclavine via a non-enzymatic adduct reaction: the substrate is an iminium intermediate that is formed spontaneously from chanoclavine-I aldehyde in the presence of glutathione. The presence of easA is not required to complete this reaction. Further conversion of agroclavine to paspalic acid is a two-step process involving oxidation of agroclavine to elymoclavine and of elymoclavine to paspalic acid, the second step being performed by the elymoclavine oxidase cloA. Paspalic acid is then further converted to D-lysergic acid. Ergovaline is assembled from D-lysergic acid and three different amino acids by the D-lysergyl-peptide-synthetase composed of a monomudular (lpsB) and a trimodular (lpsA) nonribosomal peptide synthetase subunit. This is FAD-linked oxidoreductase easE from Epichloe festucae var. lolii (Neotyphodium lolii).